Reading from the N-terminus, the 434-residue chain is GTPase Obg (434 aa).

The 159-residue stretch at 1–159 (MQFIDRCQIK…KTVRLELKYL (159 aa)) folds into the Obg domain. The OBG-type G domain maps to 160–329 (ANVGIVGYPN…LVDRVFDLYQ (170 aa)). Residues 166 to 173 (GYPNAGKS), 191 to 195 (FTTLV), 212 to 215 (DIPG), 282 to 285 (NKMD), and 310 to 312 (ISA) each bind GTP. Mg(2+)-binding residues include Ser173 and Thr193. One can recognise an OCT domain in the interval 356-434 (EKTIDDDPLD…ICDYEYLIDE (79 aa)).

It belongs to the TRAFAC class OBG-HflX-like GTPase superfamily. OBG GTPase family. In terms of assembly, monomer. The cofactor is Mg(2+).

The protein resides in the cytoplasm. Functionally, an essential GTPase which binds GTP, GDP and possibly (p)ppGpp with moderate affinity, with high nucleotide exchange rates and a fairly low GTP hydrolysis rate. Plays a role in control of the cell cycle, stress response, ribosome biogenesis and in those bacteria that undergo differentiation, in morphogenesis control. The chain is GTPase Obg from Mycoplasmoides gallisepticum (strain R(low / passage 15 / clone 2)) (Mycoplasma gallisepticum).